A 230-amino-acid polypeptide reads, in one-letter code: Ion-translocating oxidoreductase complex subunit E (230 aa).

5 consecutive transmembrane segments (helical) span residues 39–59 (LGLG…VSLI), 69–89 (IPVF…LMNA), 93–113 (GLYL…IIIG), 125–145 (LPAA…LVVL), and 182–202 (SFLL…LIAL).

The protein belongs to the NqrDE/RnfAE family. The complex is composed of six subunits: RnfA, RnfB, RnfC, RnfD, RnfE and RnfG.

The protein localises to the cell inner membrane. Functionally, part of a membrane-bound complex that couples electron transfer with translocation of ions across the membrane. In Vibrio vulnificus (strain YJ016), this protein is Ion-translocating oxidoreductase complex subunit E.